Consider the following 423-residue polypeptide: Imidazolonepropionase (423 aa).

Fe(3+) contacts are provided by His78 and His80. Zn(2+) is bound by residues His78 and His80. Positions 87, 150, and 183 each coordinate 4-imidazolone-5-propanoate. Residue Tyr150 participates in N-formimidoyl-L-glutamate binding. His247 lines the Fe(3+) pocket. His247 is a Zn(2+) binding site. Glu250 contacts 4-imidazolone-5-propanoate. Asp322 serves as a coordination point for Fe(3+). Asp322 serves as a coordination point for Zn(2+). 2 residues coordinate N-formimidoyl-L-glutamate: Asn324 and Gly326. Residue Ser327 coordinates 4-imidazolone-5-propanoate.

This sequence belongs to the metallo-dependent hydrolases superfamily. HutI family. Zn(2+) serves as cofactor. The cofactor is Fe(3+).

The protein localises to the cytoplasm. It carries out the reaction 4-imidazolone-5-propanoate + H2O = N-formimidoyl-L-glutamate. It functions in the pathway amino-acid degradation; L-histidine degradation into L-glutamate; N-formimidoyl-L-glutamate from L-histidine: step 3/3. In terms of biological role, catalyzes the hydrolytic cleavage of the carbon-nitrogen bond in imidazolone-5-propanoate to yield N-formimidoyl-L-glutamate. It is the third step in the universal histidine degradation pathway. The protein is Imidazolonepropionase of Bacillus cereus (strain ATCC 10987 / NRS 248).